The primary structure comprises 308 residues: D-alanine--D-alanine ligase (308 aa).

The ATP-grasp domain maps to 105 to 302; the sequence is KAIFRSLGLA…FPDLCDRILD (198 aa). Residue 133-188 coordinates ATP; the sequence is DLPFGLPCVVKPAGEGSSVGVHLVNAAAELGPACRDAAGYAGDVIVERYVKGTEVD. Asp-256, Glu-269, and Asn-271 together coordinate Mg(2+).

It belongs to the D-alanine--D-alanine ligase family. Mg(2+) is required as a cofactor. The cofactor is Mn(2+).

Its subcellular location is the cytoplasm. The enzyme catalyses 2 D-alanine + ATP = D-alanyl-D-alanine + ADP + phosphate + H(+). The protein operates within cell wall biogenesis; peptidoglycan biosynthesis. Its function is as follows. Cell wall formation. This Anaeromyxobacter dehalogenans (strain 2CP-C) protein is D-alanine--D-alanine ligase.